A 200-amino-acid chain; its full sequence is Large ribosomal subunit protein bL25 (200 aa).

It belongs to the bacterial ribosomal protein bL25 family. CTC subfamily. As to quaternary structure, part of the 50S ribosomal subunit; part of the 5S rRNA/L5/L18/L25 subcomplex. Contacts the 5S rRNA. Binds to the 5S rRNA independently of L5 and L18.

Its function is as follows. This is one of the proteins that binds to the 5S RNA in the ribosome where it forms part of the central protuberance. In Pseudomonas fluorescens (strain SBW25), this protein is Large ribosomal subunit protein bL25.